Consider the following 1042-residue polypeptide: Isoleucine--tRNA ligase (1042 aa).

Residues 48–58 (PFATGLPHFGH) carry the 'HIGH' region motif. The short motif at 594–598 (KMSKS) is the 'KMSKS' region element. Lys-597 is an ATP binding site.

The protein belongs to the class-I aminoacyl-tRNA synthetase family. IleS type 2 subfamily. In terms of assembly, monomer. Zn(2+) serves as cofactor.

The protein resides in the cytoplasm. It catalyses the reaction tRNA(Ile) + L-isoleucine + ATP = L-isoleucyl-tRNA(Ile) + AMP + diphosphate. Functionally, catalyzes the attachment of isoleucine to tRNA(Ile). As IleRS can inadvertently accommodate and process structurally similar amino acids such as valine, to avoid such errors it has two additional distinct tRNA(Ile)-dependent editing activities. One activity is designated as 'pretransfer' editing and involves the hydrolysis of activated Val-AMP. The other activity is designated 'posttransfer' editing and involves deacylation of mischarged Val-tRNA(Ile). This Borrelia garinii subsp. bavariensis (strain ATCC BAA-2496 / DSM 23469 / PBi) (Borreliella bavariensis) protein is Isoleucine--tRNA ligase.